The chain runs to 472 residues: MKIKTRFAPSPTGYLHVGGARTALYSWLFARNHGGEFVLRIEDTDLERSTPEAIEAIMDGMNWLNLQWDEGPYFQTKRFDRYNNVIDEMLEAGTAYKCYCSKERLEALREEQMAKGEKPRYDGRCRHSHEHHADDEPCVVRFANPQQGSVIFDDQIRGPIEFSNQELDDLIIRRTDGSPTYNFCVVVDDWDMAITHVIRGEDHINNTPRQINILKALNAPVPVYAHVSMINGDDGKKLSKRHGAVSVMQYRDDGYLPEALLNYLVRLGWSHGDQEIFTREEMIEFFSLGAVSKSASAFNTDKLLWLNHHYINTLPAEYVATHLQWHIEQENIDTRNGPQLAELVKLLGERCKTLKEMAQSCRYFYEEFAEFDADAAKKHLRPVARQPLEMVRDKLAAISDWTAENVHHAIQATADELEVGMGKVGMPLRVAVTGAGQSPALDVTVHAIGKSRSVDRINKALAFIAEREGQAS.

The short motif at 9–19 is the 'HIGH' region element; it reads PSPTGYLHVGG. Residues Cys-98, Cys-100, Cys-125, and His-127 each coordinate Zn(2+). The 'KMSKS' region motif lies at 237–241; it reads KLSKR. ATP is bound at residue Lys-240.

The protein belongs to the class-I aminoacyl-tRNA synthetase family. Glutamate--tRNA ligase type 1 subfamily. Monomer. Requires Zn(2+) as cofactor.

It is found in the cytoplasm. It carries out the reaction tRNA(Glu) + L-glutamate + ATP = L-glutamyl-tRNA(Glu) + AMP + diphosphate. In terms of biological role, catalyzes the attachment of glutamate to tRNA(Glu) in a two-step reaction: glutamate is first activated by ATP to form Glu-AMP and then transferred to the acceptor end of tRNA(Glu). The polypeptide is Glutamate--tRNA ligase (Klebsiella pneumoniae subsp. pneumoniae (strain ATCC 700721 / MGH 78578)).